We begin with the raw amino-acid sequence, 263 residues long: Glutamate racemase (263 aa).

Substrate contacts are provided by residues 13–14 (DS) and 45–46 (YG). The active-site Proton donor/acceptor is the Cys77. 78-79 (NT) is a binding site for substrate. The Proton donor/acceptor role is filled by Cys185. Position 186 to 187 (186 to 187 (TH)) interacts with substrate.

It belongs to the aspartate/glutamate racemases family.

The enzyme catalyses L-glutamate = D-glutamate. Its pathway is cell wall biogenesis; peptidoglycan biosynthesis. In terms of biological role, provides the (R)-glutamate required for cell wall biosynthesis. The chain is Glutamate racemase from Vibrio vulnificus (strain CMCP6).